We begin with the raw amino-acid sequence, 99 residues long: SVVKREDFSLPAYVDRRDYPLPDVAHVKHLSASQKALKEKEKASWSSLSMDEKVELYRIKFKETFAEMNRGSNEWKTVVGTATFFIGFTALIIMWQKRY.

The Mitochondrial matrix portion of the chain corresponds to 1–73 (SVVKREDFSL…TFAEMNRGSN (73 aa)). K4 is modified (N6-acetyllysine; alternate). The residue at position 4 (K4) is an N6-succinyllysine; alternate. The residue at position 28 (K28) is an N6-acetyllysine. Phosphoserine occurs at positions 31 and 33. K35 is modified (N6-acetyllysine; alternate). K35 bears the N6-succinyllysine; alternate mark. K42 bears the N6-acetyllysine mark. A helical membrane pass occupies residues 74 to 99 (EWKTVVGTATFFIGFTALIIMWQKRY).

Belongs to the cytochrome c oxidase IV family. As to quaternary structure, component of the cytochrome c oxidase (complex IV, CIV), a multisubunit enzyme composed of 14 subunits. The complex is composed of a catalytic core of 3 subunits MT-CO1, MT-CO2 and MT-CO3, encoded in the mitochondrial DNA, and 11 supernumerary subunits COX4I, COX5A, COX5B, COX6A, COX6B, COX6C, COX7A, COX7B, COX7C, COX8 and NDUFA4, which are encoded in the nuclear genome. The complex exists as a monomer or a dimer and forms supercomplexes (SCs) in the inner mitochondrial membrane with NADH-ubiquinone oxidoreductase (complex I, CI) and ubiquinol-cytochrome c oxidoreductase (cytochrome b-c1 complex, complex III, CIII), resulting in different assemblies (supercomplex SCI(1)III(2)IV(1) and megacomplex MCI(2)III(2)IV(2)). Interacts with PHB2; the interaction decreases in absence of SPHK2. Interacts with AFG1L. Interacts with ABCB7; this interaction allows the regulation of cellular iron homeostasis and cellular reactive oxygen species (ROS) levels in cardiomyocytes. Interacts with FLVCR2; this interaction occurs in the absence of heme and is disrupted upon heme binding. Interacts with IRGC.

The protein localises to the mitochondrion inner membrane. It participates in energy metabolism; oxidative phosphorylation. In terms of biological role, component of the cytochrome c oxidase, the last enzyme in the mitochondrial electron transport chain which drives oxidative phosphorylation. The respiratory chain contains 3 multisubunit complexes succinate dehydrogenase (complex II, CII), ubiquinol-cytochrome c oxidoreductase (cytochrome b-c1 complex, complex III, CIII) and cytochrome c oxidase (complex IV, CIV), that cooperate to transfer electrons derived from NADH and succinate to molecular oxygen, creating an electrochemical gradient over the inner membrane that drives transmembrane transport and the ATP synthase. Cytochrome c oxidase is the component of the respiratory chain that catalyzes the reduction of oxygen to water. Electrons originating from reduced cytochrome c in the intermembrane space (IMS) are transferred via the dinuclear copper A center (CU(A)) of subunit 2 and heme A of subunit 1 to the active site in subunit 1, a binuclear center (BNC) formed by heme A3 and copper B (CU(B)). The BNC reduces molecular oxygen to 2 water molecules using 4 electrons from cytochrome c in the IMS and 4 protons from the mitochondrial matrix. This is Cytochrome c oxidase subunit 4 isoform 1, mitochondrial (COX4I1) from Trachypithecus cristatus (Silvered leaf-monkey).